The primary structure comprises 71 residues: Paralithocin 2 (71 aa).

Residues 1–23 (MGAAKVLLVVLAVMVAVPNLAEG) form the signal peptide. 4 cysteine pairs are disulfide-bonded: C29-C58, C34-C54, C39-C52, and C44-C55. At R70 the chain carries Arginine amide; partial.

This sequence belongs to the paralithocin family. In terms of processing, the amidated form is probably the active form.

Its function is as follows. Has antibacterial activity, mainly against marine Gram-positive bacteria like C.maltaromaticum (MIC=50 uM), C.mobile (MIC=50 uM), C.divergens (MIC=50 uM) and C.funditum (MIC=25 uM) but also against C.glutamicum (MIC=12.5 uM). Has very little or no activity against Gram-negative bacteria. This Paralithodes camtschaticus (Red king crab) protein is Paralithocin 2.